Reading from the N-terminus, the 396-residue chain is Ribosomal RNA large subunit methyltransferase I (396 aa).

One can recognise a PUA domain in the interval 2–81 (TVSIYLAKGR…EAIDKDFFVR (80 aa)).

Belongs to the methyltransferase superfamily. RlmI family.

It is found in the cytoplasm. The catalysed reaction is cytidine(1962) in 23S rRNA + S-adenosyl-L-methionine = 5-methylcytidine(1962) in 23S rRNA + S-adenosyl-L-homocysteine + H(+). Its function is as follows. Specifically methylates the cytosine at position 1962 (m5C1962) of 23S rRNA. The polypeptide is Ribosomal RNA large subunit methyltransferase I (Aliivibrio fischeri (strain ATCC 700601 / ES114) (Vibrio fischeri)).